The chain runs to 186 residues: Peptidyl-tRNA hydrolase (186 aa).

A tRNA-binding site is contributed by Tyr-14. His-19 serves as the catalytic Proton acceptor. TRNA is bound by residues Tyr-61, Asn-63, and Asn-107.

This sequence belongs to the PTH family. As to quaternary structure, monomer.

It is found in the cytoplasm. It catalyses the reaction an N-acyl-L-alpha-aminoacyl-tRNA + H2O = an N-acyl-L-amino acid + a tRNA + H(+). Its function is as follows. Hydrolyzes ribosome-free peptidyl-tRNAs (with 1 or more amino acids incorporated), which drop off the ribosome during protein synthesis, or as a result of ribosome stalling. Catalyzes the release of premature peptidyl moieties from peptidyl-tRNA molecules trapped in stalled 50S ribosomal subunits, and thus maintains levels of free tRNAs and 50S ribosomes. This chain is Peptidyl-tRNA hydrolase, found in Helicobacter pylori (strain P12).